The following is a 514-amino-acid chain: Cytochrome P450 monooxygenase FUS8 (514 aa).

The helical transmembrane segment at 24–44 (VFENLTVTNTVCAFIALFIIV) threads the bilayer. Residues Asn225 and Asn443 are each glycosylated (N-linked (GlcNAc...) asparagine). Cys460 contributes to the heme binding site.

The protein belongs to the cytochrome P450 family. Heme is required as a cofactor.

It is found in the membrane. It participates in mycotoxin biosynthesis. Cytochrome P450 monooxygenase; part of the gene cluster that mediates the biosynthesis of the mycotoxin fusarin C. Within the cluster, FUS1, FUS2, FUS8 and FUS9 are sufficient for fusarin production. The roles of the other FUS members are yet undetermined. The fusarin C synthetase FUS1 is responsible for the condensation of one acetyl-coenzyme A (CoA) unit with six malonyl-CoA units and the amide linkage of the arising heptaketide and homoserine, subsequently releasing the first intermediate, prefusarin, as an alcohol with an open ring structure. The cytochrome P450 monooxygenase FUS8 participates in multiple oxidation processes at carbon C-20 and is able to use the FUS1 product as substrate, resulting in formation of 20-hydroxy-prefusarin. This reaction seems to be essential before the 2-pyrrolidone ring closure can be catalyzed by FUS2, generating 20-hydroxy-fusarin. FUS8 is able to further oxidizes carbon C-20 after ring closure, resulting in the formation of carboxy-fusarin C. As the last step, FUS9 methylates the hydroxyl group at C-21 to generate fusarin C. Fusarin C can then rearrange to epi-fusarin C, the (z)-isomers, and fusarin A and fusarin D. This chain is Cytochrome P450 monooxygenase FUS8, found in Gibberella fujikuroi (strain CBS 195.34 / IMI 58289 / NRRL A-6831) (Bakanae and foot rot disease fungus).